Here is a 346-residue protein sequence, read N- to C-terminus: D-alanine--D-alanine ligase (346 aa).

Residues 134–340 (KFLAESLGVK…IDYTYIHSIQ (207 aa)) enclose the ATP-grasp domain. 161-212 (EYPVIIKPVRLGSSIGVSIVKSEAELDYALDVAFEFDNDVIVEPFIDGVKEF) is a binding site for ATP. Mg(2+) contacts are provided by aspartate 284, glutamate 296, and asparagine 298.

It belongs to the D-alanine--D-alanine ligase family. It depends on Mg(2+) as a cofactor. The cofactor is Mn(2+).

It localises to the cytoplasm. It catalyses the reaction 2 D-alanine + ATP = D-alanyl-D-alanine + ADP + phosphate + H(+). Its pathway is cell wall biogenesis; peptidoglycan biosynthesis. Cell wall formation. The chain is D-alanine--D-alanine ligase from Sulfurovum sp. (strain NBC37-1).